The primary structure comprises 103 residues: Large ribosomal subunit protein uL24 (103 aa).

It belongs to the universal ribosomal protein uL24 family. In terms of assembly, part of the 50S ribosomal subunit.

Functionally, one of two assembly initiator proteins, it binds directly to the 5'-end of the 23S rRNA, where it nucleates assembly of the 50S subunit. One of the proteins that surrounds the polypeptide exit tunnel on the outside of the subunit. This Listeria monocytogenes serotype 4a (strain HCC23) protein is Large ribosomal subunit protein uL24.